The sequence spans 413 residues: 3-isopropylmalate dehydratase large subunit (413 aa).

Residues Cys-293, Cys-353, and Cys-356 each contribute to the [4Fe-4S] cluster site.

This sequence belongs to the aconitase/IPM isomerase family. LeuC type 2 subfamily. As to quaternary structure, heterodimer of LeuC and LeuD. [4Fe-4S] cluster is required as a cofactor.

The catalysed reaction is (2R,3S)-3-isopropylmalate = (2S)-2-isopropylmalate. It participates in amino-acid biosynthesis; L-leucine biosynthesis; L-leucine from 3-methyl-2-oxobutanoate: step 2/4. Its function is as follows. Catalyzes the isomerization between 2-isopropylmalate and 3-isopropylmalate, via the formation of 2-isopropylmaleate. This is 3-isopropylmalate dehydratase large subunit from Picrophilus torridus (strain ATCC 700027 / DSM 9790 / JCM 10055 / NBRC 100828 / KAW 2/3).